A 175-amino-acid polypeptide reads, in one-letter code: Lipopolysaccharide export system protein LptH (175 aa).

An N-terminal signal peptide occupies residues 1–24 (MRFVNTLPLIFGLTAALGSSMALA).

The protein belongs to the LptA family. Component of the lipopolysaccharide transport and assembly complex. Mainly exists as a dimer in solution. Tends to oligomerize already in solution. The protomers follow one another in a head-to-tail fashion throughout the crystal lattice, yielding a continuous fiber arrangement.

The protein resides in the periplasm. In terms of biological role, involved in the assembly of lipopolysaccharide (LPS). Required for the translocation of LPS from the inner membrane to the outer membrane. May form a bridge between the inner membrane and the outer membrane, via interactions with LptC and LptD, thereby facilitating LPS transfer across the periplasm. Binds LPS. Important for cell envelope stability and essential for growth, cell viability and ability to cause infection in different animal models. This Pseudomonas aeruginosa (strain ATCC 15692 / DSM 22644 / CIP 104116 / JCM 14847 / LMG 12228 / 1C / PRS 101 / PAO1) protein is Lipopolysaccharide export system protein LptH.